The following is a 368-amino-acid chain: uncharacterized protein (368 aa).

In terms of biological role, might be involved in sporulation. This is an uncharacterized protein from Brachyspira hyodysenteriae (strain ATCC 49526 / WA1).